The chain runs to 23 residues: Toxin Acra2 (23 aa).

One can recognise an LCN-type CS-alpha/beta domain in the interval Lys2–Cys23.

Contains 4 disulfide bonds. In terms of tissue distribution, expressed by the venom gland.

It is found in the secreted. Its function is as follows. Excitatory insect toxins induce a spastic paralysis. They bind voltage-independently at site-4 of sodium channels (Nav) and shift the voltage of activation toward more negative potentials thereby affecting sodium channel activation and promoting spontaneous and repetitive firing. Is lethal to mice. Is about 1% of the total protein in the venom. The protein is Toxin Acra2 of Androctonus crassicauda (Arabian fat-tailed scorpion).